Consider the following 435-residue polypeptide: Probable exopolygalacturonase B (435 aa).

A signal peptide spans 1–15 (MKFFLATLFASAVSS). Residues Asn59, Asn184, and Asn224 are each glycosylated (N-linked (GlcNAc...) asparagine). 5 PbH1 repeats span residues 208 to 239 (SKDV…DSLN), 240 to 261 (VDGL…SPKP), 262 to 283 (NTTN…SMGS), 294 to 315 (IEHA…RLKA), and 326 to 347 (INNI…VLDQ). Asp254 functions as the Proton donor in the catalytic mechanism. Cysteines 256 and 273 form a disulfide. N-linked (GlcNAc...) asparagine glycosylation is found at Asn262 and Asn274. His277 is an active-site residue. N-linked (GlcNAc...) asparagine glycosylation is found at Asn301, Asn328, Asn365, and Asn373. The stretch at 366-388 (VTNILFENISGTSSGKNGKVVAD) is one PbH1 6 repeat. Cysteines 391 and 397 form a disulfide. The N-linked (GlcNAc...) asparagine glycan is linked to Asn406.

The protein belongs to the glycosyl hydrolase 28 family.

The protein resides in the secreted. The enzyme catalyses [(1-&gt;4)-alpha-D-galacturonosyl](n) + H2O = alpha-D-galacturonate + [(1-&gt;4)-alpha-D-galacturonosyl](n-1). Functionally, specific in hydrolyzing the terminal glycosidic bond of polygalacturonic acid and oligogalacturonates. The protein is Probable exopolygalacturonase B (pgxB) of Aspergillus oryzae (strain ATCC 42149 / RIB 40) (Yellow koji mold).